The chain runs to 604 residues: Afamin (604 aa).

A signal peptide spans 1 to 21; the sequence is MKQLKLTGFVIFFFFLTESLT. Albumin domains lie at 22 to 210, 211 to 403, and 404 to 598; these read LPTQ…EPFI, YYLK…RFNE, and TTEK…PKLA. 17 disulfides stabilise this stretch: Cys-77–Cys-86, Cys-99–Cys-114, Cys-113–Cys-124, Cys-148–Cys-193, Cys-192–Cys-201, Cys-224–Cys-270, Cys-269–Cys-277, Cys-289–Cys-303, Cys-302–Cys-313, Cys-340–Cys-385, Cys-384–Cys-393, Cys-416–Cys-462, Cys-461–Cys-470, Cys-483–Cys-499, Cys-498–Cys-509, Cys-536–Cys-581, and Cys-580–Cys-589. A glycan (N-linked (GlcNAc...) asparagine) is linked at Asn-109. Residues 215 to 319 form a binding pocket for hydrophobic ligands region; the sequence is ALSSYQKNAC…RGECIIYSNK (105 aa). Residue Asn-434 is glycosylated (N-linked (GlcNAc...) asparagine).

It belongs to the ALB/AFP/VDB family. In terms of assembly, forms a 1:1 complex with Wnt family members; interacts with WNT3A and WNT5A. Interacts with WNT1, WNT2B, WNT3, WNT7A, WNT7B, WNT8, WNT9A, WNT9B, WNT10A and WNT10B. N-glycosylated; more than 90% of the glycans are sialylated.

The protein resides in the secreted. Its function is as follows. Functions as a carrier for hydrophobic molecules in body fluids. Essential for the solubility and activity of lipidated Wnt family members, including WNT1, WNT2B, WNT3, WNT3A, WNT5A, WNT7A, WNT7B, WNT8, WNT9A, WNT9B, WNT10A and WNT10B. Binds vitamin E. May transport vitamin E in body fluids under conditions where the lipoprotein system is not sufficient. May be involved in the transport of vitamin E across the blood-brain barrier. The protein is Afamin (AFM) of Bos taurus (Bovine).